The primary structure comprises 347 residues: Holliday junction branch migration complex subunit RuvB (347 aa).

The large ATPase domain (RuvB-L) stretch occupies residues 4 to 185; that stretch reads TDRLITPAPL…FGIISRLEFY (182 aa). ATP is bound by residues L24, R25, G66, K69, T70, T71, 132–134, R175, Y185, and R222; that span reads EDY. T70 serves as a coordination point for Mg(2+). The interval 186–256 is small ATPAse domain (RuvB-S); it reads SVEELTQIVM…VADAALLMLD (71 aa). A head domain (RuvB-H) region spans residues 259–347; that stretch reads AIGLDVMDRK…LSADLWDEKQ (89 aa). 3 residues coordinate DNA: R295, R314, and R319.

Belongs to the RuvB family. Homohexamer. Forms an RuvA(8)-RuvB(12)-Holliday junction (HJ) complex. HJ DNA is sandwiched between 2 RuvA tetramers; dsDNA enters through RuvA and exits via RuvB. An RuvB hexamer assembles on each DNA strand where it exits the tetramer. Each RuvB hexamer is contacted by two RuvA subunits (via domain III) on 2 adjacent RuvB subunits; this complex drives branch migration. In the full resolvosome a probable DNA-RuvA(4)-RuvB(12)-RuvC(2) complex forms which resolves the HJ.

The protein resides in the cytoplasm. It carries out the reaction ATP + H2O = ADP + phosphate + H(+). The RuvA-RuvB-RuvC complex processes Holliday junction (HJ) DNA during genetic recombination and DNA repair, while the RuvA-RuvB complex plays an important role in the rescue of blocked DNA replication forks via replication fork reversal (RFR). RuvA specifically binds to HJ cruciform DNA, conferring on it an open structure. The RuvB hexamer acts as an ATP-dependent pump, pulling dsDNA into and through the RuvAB complex. RuvB forms 2 homohexamers on either side of HJ DNA bound by 1 or 2 RuvA tetramers; 4 subunits per hexamer contact DNA at a time. Coordinated motions by a converter formed by DNA-disengaged RuvB subunits stimulates ATP hydrolysis and nucleotide exchange. Immobilization of the converter enables RuvB to convert the ATP-contained energy into a lever motion, pulling 2 nucleotides of DNA out of the RuvA tetramer per ATP hydrolyzed, thus driving DNA branch migration. The RuvB motors rotate together with the DNA substrate, which together with the progressing nucleotide cycle form the mechanistic basis for DNA recombination by continuous HJ branch migration. Branch migration allows RuvC to scan DNA until it finds its consensus sequence, where it cleaves and resolves cruciform DNA. The chain is Holliday junction branch migration complex subunit RuvB from Nitrosospira multiformis (strain ATCC 25196 / NCIMB 11849 / C 71).